Reading from the N-terminus, the 96-residue chain is Citrate lyase acyl carrier protein (96 aa).

Serine 14 is modified (O-(phosphoribosyl dephospho-coenzyme A)serine).

It belongs to the CitD family. Oligomer with a subunit composition of (alpha,beta,gamma)6.

The protein resides in the cytoplasm. Covalent carrier of the coenzyme of citrate lyase. The polypeptide is Citrate lyase acyl carrier protein (Lactococcus lactis subsp. lactis (strain IL1403) (Streptococcus lactis)).